The primary structure comprises 490 residues: Tryptophan 5-hydroxylase 2 (490 aa).

Ser-19 carries the post-translational modification Phosphoserine. Polar residues predominate over residues 31–42 (LGSSTLNKPNSG). Residues 31–58 (LGSSTLNKPNSGKNDDKGNKGSSKREAA) form a disordered region. Over residues 43 to 58 (KNDDKGNKGSSKREAA) the composition is skewed to basic and acidic residues. An ACT domain is found at 65–140 (AVVFSLKNEV…TIVTLNPPEN (76 aa)). Fe cation-binding residues include His-318, His-323, and Glu-363.

It belongs to the biopterin-dependent aromatic amino acid hydroxylase family. In terms of assembly, interacts with DNAJC12. It depends on Fe(2+) as a cofactor. As to expression, brain specific.

The catalysed reaction is (6R)-L-erythro-5,6,7,8-tetrahydrobiopterin + L-tryptophan + O2 = 5-hydroxy-L-tryptophan + (4aS,6R)-4a-hydroxy-L-erythro-5,6,7,8-tetrahydrobiopterin. Its pathway is aromatic compound metabolism; serotonin biosynthesis; serotonin from L-tryptophan: step 1/2. This Homo sapiens (Human) protein is Tryptophan 5-hydroxylase 2 (TPH2).